Reading from the N-terminus, the 219-residue chain is HTH-type transcriptional activator FasR (219 aa).

The tract at residues 1-30 (MSDLANTAERRGEKRPAGGNRRGNRLPRDE) is disordered. In terms of domain architecture, HTH tetR-type spans 29 to 89 (DERRGQLLIA…AVLQRHVDNL (61 aa)). Positions 52–71 (GMDEIADRAGVSKPVLYQHF) form a DNA-binding region, H-T-H motif.

In terms of assembly, homodimer.

Its activity is regulated as follows. FasR:DNA binding is regulated by long-chain acyl-CoAs (C14- to C26-CoA), which act as effector molecules that modulate the affinity of FasR for its DNA binding sequences and therefore modulate the expression of the essential fas-acpS operon. In terms of biological role, transcriptional activator that plays a central role in sensing mycobacterial long-chain fatty acids and regulating lipid biosynthesis. Activates the expression of the genes encoding the fatty acid synthase (fas) and the 4-phosphopantetheinyl transferase (acpS), whose products are involved in the fatty acid and mycolic acid biosynthesis. Specifically binds to three conserved operator sequences present in the fas-acpS promoter region. Essential for M.smegmatis viability. In Mycolicibacterium smegmatis (strain ATCC 700084 / mc(2)155) (Mycobacterium smegmatis), this protein is HTH-type transcriptional activator FasR.